The chain runs to 142 residues: Hemoglobin cathodic subunit alpha (142 aa).

Residue Ser1 is modified to N-acetylserine. One can recognise a Globin domain in the interval 1 to 142; it reads SLTAKDKALV…LSSTAADKYR (142 aa). His59 is an O2 binding site. Heme b is bound at residue His88.

The protein belongs to the globin family. Heterotetramer of two alpha chains and two beta chains.

Its function is as follows. Involved in oxygen transport from gills to the various peripheral tissues. This Hoplosternum littorale (Hassar) protein is Hemoglobin cathodic subunit alpha.